Here is a 431-residue protein sequence, read N- to C-terminus: Probable carboxylic ester hydrolase LipM (431 aa).

Helical transmembrane passes span 7 to 27, 38 to 58, and 75 to 95; these read IHVI…AATI, FASL…LPTL, and PVRA…LNLS. Active-site residues include S261, D357, and H390.

This sequence belongs to the 'GDXG' lipolytic enzyme family.

The protein resides in the membrane. This Mycobacterium tuberculosis (strain ATCC 25618 / H37Rv) protein is Probable carboxylic ester hydrolase LipM.